We begin with the raw amino-acid sequence, 470 residues long: Methylenetetrahydrofolate--tRNA-(uracil-5-)-methyltransferase TrmFO (470 aa).

Residue 10 to 15 (GAGLAG) participates in FAD binding.

The protein belongs to the MnmG family. TrmFO subfamily. Requires FAD as cofactor.

It is found in the cytoplasm. It carries out the reaction uridine(54) in tRNA + (6R)-5,10-methylene-5,6,7,8-tetrahydrofolate + NADH + H(+) = 5-methyluridine(54) in tRNA + (6S)-5,6,7,8-tetrahydrofolate + NAD(+). The catalysed reaction is uridine(54) in tRNA + (6R)-5,10-methylene-5,6,7,8-tetrahydrofolate + NADPH + H(+) = 5-methyluridine(54) in tRNA + (6S)-5,6,7,8-tetrahydrofolate + NADP(+). Functionally, catalyzes the folate-dependent formation of 5-methyl-uridine at position 54 (M-5-U54) in all tRNAs. This chain is Methylenetetrahydrofolate--tRNA-(uracil-5-)-methyltransferase TrmFO, found in Prochlorococcus marinus (strain MIT 9215).